We begin with the raw amino-acid sequence, 408 residues long: MKITGIIVEYNPFHNGHKYHIKKTRSLTNCEGIIAVISGNFVQRGAPSIVDKWNKTKMALLNGVDLVLELPALYSLSSAEFFAYGAVSLLENLGVVKNLCFGSECEDIKLLTLMGKILYEEPEELKLTLKERLHQGMSYASARGNALKEFLCHRYSLKNNSITEMLHLPNNILAIEYCKSLARLKSTINPVSIKRIGNSYNSTYINNRFSSATSIRNFLKENNSLQELEKALPYNILCILKDLSHSNYRFTFEDSLLPYLKYKNLFYGKNIKYLPDVSEGLENRIESALKNASSYDQIINYAKTKRYAYSRISRILCQFFLGFENLDTKVLRKNRCPYARVLGFNNKGMEILKKIKQNSSIPVYTKLPKNANDMLKLDLMATKGYSLLNKNIAFNQDYISSPLIIDKI.

ATP contacts are provided by residues 7-20 (IVEY…HKYH), Gly-102, Asn-170, and 195-196 (RI).

The protein belongs to the TmcAL family.

Its subcellular location is the cytoplasm. The enzyme catalyses cytidine(34) in elongator tRNA(Met) + acetate + ATP = N(4)-acetylcytidine(34) in elongator tRNA(Met) + AMP + diphosphate. Functionally, catalyzes the formation of N(4)-acetylcytidine (ac(4)C) at the wobble position of elongator tRNA(Met), using acetate and ATP as substrates. First activates an acetate ion to form acetyladenylate (Ac-AMP) and then transfers the acetyl group to tRNA to form ac(4)C34. This is tRNA(Met) cytidine acetate ligase from Clostridium kluyveri (strain NBRC 12016).